The sequence spans 138 residues: Large ribosomal subunit protein uL16 (138 aa).

The protein belongs to the universal ribosomal protein uL16 family. In terms of assembly, part of the 50S ribosomal subunit.

Its function is as follows. Binds 23S rRNA and is also seen to make contacts with the A and possibly P site tRNAs. The sequence is that of Large ribosomal subunit protein uL16 from Paramagnetospirillum magneticum (strain ATCC 700264 / AMB-1) (Magnetospirillum magneticum).